The primary structure comprises 254 residues: Proteasome subunit alpha (254 aa).

Residues 231–254 (ESGAASADGEAETEAETDSGSDEE) are disordered. Acidic residues predominate over residues 239 to 254 (GEAETEAETDSGSDEE).

It belongs to the peptidase T1A family. As to quaternary structure, the 20S proteasome core is composed of 14 alpha and 14 beta subunits that assemble into four stacked heptameric rings, resulting in a barrel-shaped structure. The two inner rings, each composed of seven catalytic beta subunits, are sandwiched by two outer rings, each composed of seven alpha subunits. The catalytic chamber with the active sites is on the inside of the barrel. Has probably a gated structure, the ends of the cylinder being occluded by the N-termini of the alpha-subunits. Is likely capped by the proteasome-associated ATPase, ARC. The N-terminus is blocked.

The protein resides in the cytoplasm. It participates in protein degradation; proteasomal Pup-dependent pathway. The formation of the proteasomal ATPase ARC-20S proteasome complex, likely via the docking of the C-termini of ARC into the intersubunit pockets in the alpha-rings, may trigger opening of the gate for substrate entry. Interconversion between the open-gate and close-gate conformations leads to a dynamic regulation of the 20S proteasome proteolysis activity. Peptidolytic activity is completely inhibited by lactacystin, and to a lesser extent, by N-acetyl-Leu-Leu-norleucinal (Ac-LLnL) and benzoyloxycarbonyl-Leu-Leu-Leu-vinylsulfone (Z-LLL-VS) in vitro. In terms of biological role, component of the proteasome core, a large protease complex with broad specificity involved in protein degradation. The S.coelicolor proteasome is able to cleave oligopeptides after hydrophobic residues, but not after basic or acidic residues, thus displaying chymotrypsin-like activity but not trypsin-like activity. This Streptomyces coelicolor (strain ATCC BAA-471 / A3(2) / M145) protein is Proteasome subunit alpha.